A 753-amino-acid polypeptide reads, in one-letter code: Taperin (753 aa).

A disordered region spans residues 141–348 (FDSPAAPRRR…IRPSSKPDME (208 aa)). Over residues 182 to 197 (PAPPVLPSQPAPPISP) the composition is skewed to pro residues. Composition is skewed to polar residues over residues 230–239 (LQKTGSNSFT) and 250–263 (VNRS…TQES). S274 bears the Phosphoserine mark. The segment covering 300–322 (TPSATPVGPPAFLAPSPASATPS) has biased composition (low complexity). Polar residues predominate over residues 323-335 (QRQWVSSATSAND). Over residues 337 to 347 (FEIRPSSKPDM) the composition is skewed to basic and acidic residues. A phosphoserine mark is found at S402, S458, and S502. The disordered stretch occupies residues 438–488 (GCPRPAISDTDKSVRRQRPASPPPFLPATTEAEPAEGLGVPGLTKNGQEPV). 2 disordered regions span residues 544 to 583 (FTVV…SGPH) and 637 to 676 (FEYP…DSEK). Residues 559-571 (HLSQTNGQFQQGA) show a composition bias toward polar residues. Residues 648–672 (EEAEEEEEEEEEEEGEDGEEEEVGP) show a composition bias toward acidic residues.

The protein belongs to the taperin family. In terms of assembly, interacts with GRXCR2; the interaction restricts TPRN to the stereocilum basal region. Interacts with actin ACTB; the interaction may stabilize stereocilia. Interacts with CLIC5. Interacts with PTPRQ. TPRN, CLIC5 and PTPQR form concentric rings at the base of stereocilia and may form a complex. Interacts with phosphatase PPP1CA; the interaction results in inhibition of PPC1A phosphatase activity. Interacts with DNA damage response proteins XRCC6/KU70, XRCC5/KU80, PARP1, TOP1 and TOP2A; these interactions recruit TPRN to sites of DNA damage where it may play a role in DNA repair.

Its subcellular location is the cell projection. It localises to the stereocilium. The protein resides in the microvillus. It is found in the nucleus. The protein localises to the nucleoplasm. Its subcellular location is the cytoplasm. In terms of biological role, essential for hearing. Required for maintenance of stereocilia on both inner and outer hair cells. Necessary for the integrity of the stereociliary rootlet. May act as an actin cytoskeleton regulator involved in the regulation of actin dynamics at the pointed end in hair cells. Forms rings at the base of stereocilia and binds actin filaments in the stereocilia which may stabilize the stereocilia. Acts as a strong inhibitor of PPP1CA phosphatase activity. Recruited to sites of DNA damage and may play a role in DNA damage repair. The polypeptide is Taperin (Tprn) (Rattus norvegicus (Rat)).